Consider the following 345-residue polypeptide: Ketol-acid reductoisomerase (NADP(+)) (345 aa).

One can recognise a KARI N-terminal Rossmann domain in the interval 2-182; the sequence is AKVYHDSSAD…GTTRAGVLET (181 aa). NADP(+) is bound by residues 25–28, Arg-48, Ser-51, Ser-53, and 83–86; these read YGSQ and DTEQ. His-108 is an active-site residue. Gly-134 contributes to the NADP(+) binding site. The 146-residue stretch at 183–328 folds into the KARI C-terminal knotted domain; the sequence is TFKEETETDL…AQLRDMMTFL (146 aa). Residues Asp-191, Glu-195, Glu-227, and Glu-231 each coordinate Mg(2+). Position 252 (Ser-252) interacts with substrate.

Belongs to the ketol-acid reductoisomerase family. Requires Mg(2+) as cofactor.

The catalysed reaction is (2R)-2,3-dihydroxy-3-methylbutanoate + NADP(+) = (2S)-2-acetolactate + NADPH + H(+). The enzyme catalyses (2R,3R)-2,3-dihydroxy-3-methylpentanoate + NADP(+) = (S)-2-ethyl-2-hydroxy-3-oxobutanoate + NADPH + H(+). It participates in amino-acid biosynthesis; L-isoleucine biosynthesis; L-isoleucine from 2-oxobutanoate: step 2/4. It functions in the pathway amino-acid biosynthesis; L-valine biosynthesis; L-valine from pyruvate: step 2/4. Its function is as follows. Involved in the biosynthesis of branched-chain amino acids (BCAA). Catalyzes an alkyl-migration followed by a ketol-acid reduction of (S)-2-acetolactate (S2AL) to yield (R)-2,3-dihydroxy-isovalerate. In the isomerase reaction, S2AL is rearranged via a Mg-dependent methyl migration to produce 3-hydroxy-3-methyl-2-ketobutyrate (HMKB). In the reductase reaction, this 2-ketoacid undergoes a metal-dependent reduction by NADPH to yield (R)-2,3-dihydroxy-isovalerate. The sequence is that of Ketol-acid reductoisomerase (NADP(+)) from Koribacter versatilis (strain Ellin345).